Here is a 209-residue protein sequence, read N- to C-terminus: Large ribosomal subunit protein uL3 (209 aa).

Positions 112–122 (GTTRGHGTQGN) are enriched in polar residues. A disordered region spans residues 112–146 (GTTRGHGTQGNIKRWGQSRGPETHGSRYHRIPGSM).

This sequence belongs to the universal ribosomal protein uL3 family. As to quaternary structure, part of the 50S ribosomal subunit. Forms a cluster with proteins L14 and L19.

One of the primary rRNA binding proteins, it binds directly near the 3'-end of the 23S rRNA, where it nucleates assembly of the 50S subunit. This chain is Large ribosomal subunit protein uL3, found in Lactobacillus gasseri (strain ATCC 33323 / DSM 20243 / BCRC 14619 / CIP 102991 / JCM 1131 / KCTC 3163 / NCIMB 11718 / NCTC 13722 / AM63).